A 399-amino-acid polypeptide reads, in one-letter code: Elongation factor Tu (399 aa).

The tr-type G domain occupies 10 to 209 (KPHVNVGTIG…EVDKYIPTPQ (200 aa)). The interval 19–26 (GHVDHGKT) is G1. 19 to 26 (GHVDHGKT) is a GTP binding site. Mg(2+) is bound at residue Thr26. The segment at 60-64 (GITIA) is G2. The interval 81-84 (DCPG) is G3. GTP-binding positions include 81 to 85 (DCPGH) and 136 to 139 (NKQD). Residues 136-139 (NKQD) form a G4 region. A G5 region spans residues 174–176 (SAL).

The protein belongs to the TRAFAC class translation factor GTPase superfamily. Classic translation factor GTPase family. EF-Tu/EF-1A subfamily. In terms of assembly, monomer.

The protein localises to the cytoplasm. The enzyme catalyses GTP + H2O = GDP + phosphate + H(+). GTP hydrolase that promotes the GTP-dependent binding of aminoacyl-tRNA to the A-site of ribosomes during protein biosynthesis. The protein is Elongation factor Tu of Helicobacter hepaticus (strain ATCC 51449 / 3B1).